The primary structure comprises 166 residues: 3-isopropylmalate dehydratase small subunit (166 aa).

This sequence belongs to the LeuD family. LeuD type 2 subfamily. As to quaternary structure, heterodimer of LeuC and LeuD.

The enzyme catalyses (2R,3S)-3-isopropylmalate = (2S)-2-isopropylmalate. Its pathway is amino-acid biosynthesis; L-leucine biosynthesis; L-leucine from 3-methyl-2-oxobutanoate: step 2/4. Functionally, catalyzes the isomerization between 2-isopropylmalate and 3-isopropylmalate, via the formation of 2-isopropylmaleate. In Moorella thermoacetica (strain ATCC 39073 / JCM 9320), this protein is 3-isopropylmalate dehydratase small subunit.